A 473-amino-acid chain; its full sequence is Aspartyl/glutamyl-tRNA(Asn/Gln) amidotransferase subunit B (473 aa).

Belongs to the GatB/GatE family. GatB subfamily. As to quaternary structure, heterotrimer of A, B and C subunits.

The catalysed reaction is L-glutamyl-tRNA(Gln) + L-glutamine + ATP + H2O = L-glutaminyl-tRNA(Gln) + L-glutamate + ADP + phosphate + H(+). The enzyme catalyses L-aspartyl-tRNA(Asn) + L-glutamine + ATP + H2O = L-asparaginyl-tRNA(Asn) + L-glutamate + ADP + phosphate + 2 H(+). In terms of biological role, allows the formation of correctly charged Asn-tRNA(Asn) or Gln-tRNA(Gln) through the transamidation of misacylated Asp-tRNA(Asn) or Glu-tRNA(Gln) in organisms which lack either or both of asparaginyl-tRNA or glutaminyl-tRNA synthetases. The reaction takes place in the presence of glutamine and ATP through an activated phospho-Asp-tRNA(Asn) or phospho-Glu-tRNA(Gln). This Sulfurisphaera tokodaii (strain DSM 16993 / JCM 10545 / NBRC 100140 / 7) (Sulfolobus tokodaii) protein is Aspartyl/glutamyl-tRNA(Asn/Gln) amidotransferase subunit B.